The primary structure comprises 418 residues: Pyruvate kinase isozyme G, chloroplastic (418 aa).

Positions 14 and 15 each coordinate K(+). Residue R21 coordinates ATP. E165 provides a ligand contact to Mg(2+). Positions 188, 189, and 221 each coordinate substrate. D189 contacts Mg(2+).

It belongs to the pyruvate kinase family. The cofactor is Mg(2+). Requires K(+) as cofactor. Expressed in developing and germinating endosperm and in roots.

Its subcellular location is the plastid. The protein localises to the chloroplast. It catalyses the reaction pyruvate + ATP = phosphoenolpyruvate + ADP + H(+). The protein operates within carbohydrate degradation; glycolysis; pyruvate from D-glyceraldehyde 3-phosphate: step 5/5. The chain is Pyruvate kinase isozyme G, chloroplastic from Ricinus communis (Castor bean).